Consider the following 526-residue polypeptide: Glucose-6-phosphate isomerase (526 aa).

The active-site Proton donor is the Glu343. Catalysis depends on residues His374 and Lys494.

Belongs to the GPI family.

Its subcellular location is the cytoplasm. The enzyme catalyses alpha-D-glucose 6-phosphate = beta-D-fructose 6-phosphate. It functions in the pathway carbohydrate biosynthesis; gluconeogenesis. It participates in carbohydrate degradation; glycolysis; D-glyceraldehyde 3-phosphate and glycerone phosphate from D-glucose: step 2/4. Functionally, catalyzes the reversible isomerization of glucose-6-phosphate to fructose-6-phosphate. The polypeptide is Glucose-6-phosphate isomerase (Dechloromonas aromatica (strain RCB)).